The primary structure comprises 545 residues: Glucans biosynthesis protein G (545 aa).

The signal sequence occupies residues M1–A35.

Belongs to the OpgD/OpgG family.

Its subcellular location is the periplasm. It functions in the pathway glycan metabolism; osmoregulated periplasmic glucan (OPG) biosynthesis. Involved in the biosynthesis of osmoregulated periplasmic glucans (OPGs). The polypeptide is Glucans biosynthesis protein G (Vibrio cholerae serotype O1 (strain ATCC 39541 / Classical Ogawa 395 / O395)).